A 375-amino-acid polypeptide reads, in one-letter code: Dual-specificity RNA methyltransferase RlmN (375 aa).

E93 acts as the Proton acceptor in catalysis. Positions 99–346 (ETNRGTLCVS…TTTRKTRGDD (248 aa)) constitute a Radical SAM core domain. C106 and C351 are joined by a disulfide. C113, C117, and C120 together coordinate [4Fe-4S] cluster. S-adenosyl-L-methionine is bound by residues 177 to 178 (GE), S209, 231 to 233 (SLH), and N308. Catalysis depends on C351, which acts as the S-methylcysteine intermediate.

The protein belongs to the radical SAM superfamily. RlmN family. [4Fe-4S] cluster serves as cofactor.

It is found in the cytoplasm. It carries out the reaction adenosine(2503) in 23S rRNA + 2 reduced [2Fe-2S]-[ferredoxin] + 2 S-adenosyl-L-methionine = 2-methyladenosine(2503) in 23S rRNA + 5'-deoxyadenosine + L-methionine + 2 oxidized [2Fe-2S]-[ferredoxin] + S-adenosyl-L-homocysteine. The enzyme catalyses adenosine(37) in tRNA + 2 reduced [2Fe-2S]-[ferredoxin] + 2 S-adenosyl-L-methionine = 2-methyladenosine(37) in tRNA + 5'-deoxyadenosine + L-methionine + 2 oxidized [2Fe-2S]-[ferredoxin] + S-adenosyl-L-homocysteine. Its function is as follows. Specifically methylates position 2 of adenine 2503 in 23S rRNA and position 2 of adenine 37 in tRNAs. m2A2503 modification seems to play a crucial role in the proofreading step occurring at the peptidyl transferase center and thus would serve to optimize ribosomal fidelity. The polypeptide is Dual-specificity RNA methyltransferase RlmN (Azoarcus sp. (strain BH72)).